Consider the following 115-residue polypeptide: Macrophage migration inhibitory factor (115 aa).

The Proton acceptor; via imino nitrogen role is filled by proline 2. The substrate site is built by lysine 33 and isoleucine 65. The residue at position 78 (lysine 78) is an N6-acetyllysine; alternate. Lysine 78 carries the post-translational modification N6-succinyllysine; alternate. Asparagine 98 lines the substrate pocket.

Belongs to the MIF family. Homotrimer. Interacts with CD74 and CXCR2 extracellular domain and COPS5. Interacts with the USO1 and BNIPL.

The protein resides in the secreted. The protein localises to the cytoplasm. It carries out the reaction 3-phenylpyruvate = enol-phenylpyruvate. The catalysed reaction is L-dopachrome = 5,6-dihydroxyindole-2-carboxylate. Pro-inflammatory cytokine involved in the innate immune response to bacterial pathogens. The expression of MIF at sites of inflammation suggests a role as mediator in regulating the function of macrophages in host defense. Counteracts the anti-inflammatory activity of glucocorticoids. Has phenylpyruvate tautomerase and dopachrome tautomerase activity (in vitro), but the physiological substrate is not known. It is not clear whether the tautomerase activity has any physiological relevance, and whether it is important for cytokine activity. The sequence is that of Macrophage migration inhibitory factor from Mus musculus (Mouse).